The following is a 229-amino-acid chain: 7-cyano-7-deazaguanine synthase (229 aa).

An ATP-binding site is contributed by 8 to 18 (FSGGQDSTTCL). Residues Cys-186, Cys-195, Cys-198, and Cys-201 each contribute to the Zn(2+) site.

Belongs to the QueC family. It depends on Zn(2+) as a cofactor.

It catalyses the reaction 7-carboxy-7-deazaguanine + NH4(+) + ATP = 7-cyano-7-deazaguanine + ADP + phosphate + H2O + H(+). The protein operates within purine metabolism; 7-cyano-7-deazaguanine biosynthesis. Catalyzes the ATP-dependent conversion of 7-carboxy-7-deazaguanine (CDG) to 7-cyano-7-deazaguanine (preQ(0)). In Edwardsiella ictaluri (strain 93-146), this protein is 7-cyano-7-deazaguanine synthase.